The sequence spans 141 residues: Large-conductance mechanosensitive channel (141 aa).

The next 3 membrane-spanning stretches (helical) occupy residues 16–36, 40–60, and 86–106; these read VIDL…VDSV, LIMP…MFIV, and GNFL…FLMV.

This sequence belongs to the MscL family. As to quaternary structure, homopentamer.

It localises to the cell inner membrane. Channel that opens in response to stretch forces in the membrane lipid bilayer. May participate in the regulation of osmotic pressure changes within the cell. This is Large-conductance mechanosensitive channel from Cupriavidus necator (strain ATCC 17699 / DSM 428 / KCTC 22496 / NCIMB 10442 / H16 / Stanier 337) (Ralstonia eutropha).